The primary structure comprises 379 residues: Chaperone protein DnaJ (379 aa).

The J domain occupies 5–69 (EYYERLGVDK…QKRAAYDQYG (65 aa)). The segment at 141 to 223 (GVEKQVKYNR…CHGSGHEKVA (83 aa)) adopts a CR-type zinc-finger fold. The Zn(2+) site is built by cysteine 154, cysteine 157, cysteine 171, cysteine 174, cysteine 197, cysteine 200, cysteine 211, and cysteine 214. 4 CXXCXGXG motif repeats span residues 154–161 (CHTCGGSG), 171–178 (CHKCGGRG), 197–204 (CDVCHGTG), and 211–218 (CTTCHGSG).

The protein belongs to the DnaJ family. Homodimer. Requires Zn(2+) as cofactor.

The protein resides in the cytoplasm. Its function is as follows. Participates actively in the response to hyperosmotic and heat shock by preventing the aggregation of stress-denatured proteins and by disaggregating proteins, also in an autonomous, DnaK-independent fashion. Unfolded proteins bind initially to DnaJ; upon interaction with the DnaJ-bound protein, DnaK hydrolyzes its bound ATP, resulting in the formation of a stable complex. GrpE releases ADP from DnaK; ATP binding to DnaK triggers the release of the substrate protein, thus completing the reaction cycle. Several rounds of ATP-dependent interactions between DnaJ, DnaK and GrpE are required for fully efficient folding. Also involved, together with DnaK and GrpE, in the DNA replication of plasmids through activation of initiation proteins. This Lactococcus lactis subsp. cremoris (strain MG1363) protein is Chaperone protein DnaJ.